A 942-amino-acid chain; its full sequence is Cilia- and flagella-associated protein 69 (942 aa).

Residues 1–16 are compositionally biased toward low complexity; it reads MSTAEASATTADAAEA. Residues 1–25 are disordered; the sequence is MSTAEASATTADAAEAGGRTKTGSP.

As to expression, expressed in ciliated olfactory sensory neurons (at protein level). Expressed in testis, specifically in sperm (at protein level).

The protein resides in the cell projection. Its subcellular location is the cilium. The protein localises to the flagellum. Its function is as follows. Cilium- and flagellum-associated protein. In the olfactory epithelium, regulates the speed of activation and termination of the odor response and thus contributes to the robustness of olfactory transduction pathways. Required for sperm flagellum assembly and stability. The sequence is that of Cilia- and flagella-associated protein 69 from Mus musculus (Mouse).